The primary structure comprises 277 residues: Putative endonuclease (277 aa).

Functionally, putative endonuclease. This chain is Putative endonuclease, found in Escherichia coli (Enterobacteria phage T5).